We begin with the raw amino-acid sequence, 326 residues long: Phospho-N-acetylmuramoyl-pentapeptide-transferase (326 aa).

Transmembrane regions (helical) follow at residues Ile3 to Ile23, Thr51 to Phe71, Val79 to Leu99, Leu115 to Met135, Val138 to Val158, Gly169 to Ala189, Met195 to Asn215, Val221 to His243, and Phe306 to Met326.

The protein belongs to the glycosyltransferase 4 family. MraY subfamily. Mg(2+) serves as cofactor.

The protein localises to the cell membrane. It carries out the reaction UDP-N-acetyl-alpha-D-muramoyl-L-alanyl-gamma-D-glutamyl-L-lysyl-D-alanyl-D-alanine + di-trans,octa-cis-undecaprenyl phosphate = Mur2Ac(oyl-L-Ala-gamma-D-Glu-L-Lys-D-Ala-D-Ala)-di-trans,octa-cis-undecaprenyl diphosphate + UMP. It participates in cell wall biogenesis; peptidoglycan biosynthesis. Catalyzes the initial step of the lipid cycle reactions in the biosynthesis of the cell wall peptidoglycan: transfers peptidoglycan precursor phospho-MurNAc-pentapeptide from UDP-MurNAc-pentapeptide onto the lipid carrier undecaprenyl phosphate, yielding undecaprenyl-pyrophosphoryl-MurNAc-pentapeptide, known as lipid I. The polypeptide is Phospho-N-acetylmuramoyl-pentapeptide-transferase (Streptococcus pneumoniae (strain ATCC 700669 / Spain 23F-1)).